A 52-amino-acid chain; its full sequence is Large ribosomal subunit protein bL33 (52 aa).

This sequence belongs to the bacterial ribosomal protein bL33 family.

In Chlamydia trachomatis serovar L2 (strain ATCC VR-902B / DSM 19102 / 434/Bu), this protein is Large ribosomal subunit protein bL33.